The primary structure comprises 510 residues: Glucose-6-phosphate 1-dehydrogenase (510 aa).

NADP(+) is bound by residues 29 to 36, Arg63, and Lys164; that span reads GASGDLAK. D-glucose 6-phosphate is bound by residues Lys164, 194–198, Glu232, and Asp251; that span reads HYLGK. His256 acts as the Proton acceptor in catalysis. An NADP(+)-binding site is contributed by Lys347. Position 350 (Lys350) interacts with D-glucose 6-phosphate. 3 residues coordinate NADP(+): Lys356, Arg360, and Arg382. Gln384 is a D-glucose 6-phosphate binding site. NADP(+) is bound by residues 390–392, 410–412, and Arg477; these read YIK and DLT.

The protein belongs to the glucose-6-phosphate dehydrogenase family.

The catalysed reaction is D-glucose 6-phosphate + NADP(+) = 6-phospho-D-glucono-1,5-lactone + NADPH + H(+). It functions in the pathway carbohydrate degradation; pentose phosphate pathway; D-ribulose 5-phosphate from D-glucose 6-phosphate (oxidative stage): step 1/3. Catalyzes the rate-limiting step of the oxidative pentose-phosphate pathway, which represents a route for the dissimilation of carbohydrates besides glycolysis. The main function of this enzyme is to provide reducing power (NADPH) and pentose phosphates for fatty acid and nucleic acid synthesis. This chain is Glucose-6-phosphate 1-dehydrogenase (gsdA), found in Aspergillus niger.